Consider the following 300-residue polypeptide: uncharacterized protein (300 aa).

At 1–7 (MGSTRKG) the chain is on the periplasmic side. Residues 8–28 (MLNVLIAAVLWGSSGVCAQYI) traverse the membrane as a helical segment. Residues 16–145 (VLWGSSGVCA…SLIGTFLLVT (130 aa)) form the EamA 1 domain. Over 29 to 45 (MEQSRMSSQFLTMIRLL) the chain is Cytoplasmic. Residues 46 to 66 (FAGLILVTFSFMHGDKIFSIL) traverse the membrane as a helical segment. Topologically, residues 67 to 71 (KNRKD) are periplasmic. A helical membrane pass occupies residues 72-92 (ALSLLIFSVVGALTVQLTFLL). Topologically, residues 93 to 99 (TIEKSNA) are cytoplasmic. Residues 100 to 120 (ATATVLQFLSPTIIVAWFALA) form a helical membrane-spanning segment. Topologically, residues 121–124 (RRTR) are periplasmic. The chain crosses the membrane as a helical span at residues 125–145 (PGILVLTAILTSLIGTFLLVT). The Cytoplasmic segment spans residues 146–151 (HGNPTS). The chain crosses the membrane as a helical span at residues 152–172 (LSISSAALFWGIASAFAAAFY). The EamA 2 domain maps to 167–291 (FAAAFYTTWP…ILSSVILISL (125 aa)). The Periplasmic segment spans residues 173–184 (TTWPSRLIAQYG). Residues 185-205 (TLPVVGWSMSFGGLILLPFYA) traverse the membrane as a helical segment. Residues 206 to 216 (KEGTHFAVSGS) are Cytoplasmic-facing. The helical transmembrane segment at 217 to 237 (LILAFFYLVVIGTSLTFSLYL) threads the bilayer. The Periplasmic portion of the chain corresponds to 238-263 (KGAQLIGGPKASILSCAEPLSSALLS). Residues 264–284 (LLLLGISFTLPDWLGTLLILS) traverse the membrane as a helical segment. Over 285-300 (SVILISLDSRRRARAA) the chain is Cytoplasmic.

Belongs to the EamA transporter family.

The protein localises to the cell inner membrane. This is an uncharacterized protein from Salmonella typhimurium (strain LT2 / SGSC1412 / ATCC 700720).